We begin with the raw amino-acid sequence, 125 residues long: Histone H1-like protein Hc1 (125 aa).

The segment at 98–125 is disordered; sequence TKAKVKPTKKAAPKTKVKTAKKTRSTKK. Residues 100–125 are compositionally biased toward basic residues; it reads AKVKPTKKAAPKTKVKTAKKTRSTKK.

Belongs to the histone H1/H5 family. HCT subfamily.

Its function is as follows. Might have a role analogous to that of eukaryotic histone proteins. The polypeptide is Histone H1-like protein Hc1 (hctA) (Chlamydia trachomatis serovar D (strain ATCC VR-885 / DSM 19411 / UW-3/Cx)).